The sequence spans 1612 residues: uncharacterized protein (1612 aa).

Positions 23-52 (ENKNIEMTTLKDKKEMKNENLSKINVKKEN) form a coiled coil. Positions 46-93 (INVKKENHDKNHDKNHDKNHDKNHDKNHDKNHDKNHDKNHDKNHDKNH) are enriched in basic and acidic residues. Disordered stretches follow at residues 46 to 94 (INVK…KNHV) and 369 to 400 (EDDN…HEIQ). Positions 375–394 (DNPLYSNNNTLKEQNTSTPL) are enriched in polar residues. A helical membrane pass occupies residues 479–499 (FIVTLSEICLILTPHYVNIIN). Disordered stretches follow at residues 698–777 (TSLT…EKKL), 992–1037 (NELD…KNDP), 1091–1157 (SGKS…RNMS), and 1257–1291 (NQTT…NQDK). The span at 708 to 777 (KNDEIKKTGE…KKKTGEEKKL (70 aa)) shows a compositional bias: basic and acidic residues. Composition is skewed to low complexity over residues 996–1028 (NNNN…NNNN), 1102–1140 (SNNN…NSTN), and 1257–1271 (NQTT…QTSN). Coiled coils occupy residues 1338–1362 (YCNN…INNK), 1444–1469 (SNKK…IDND), and 1553–1601 (NMED…KFLT). The span at 1554–1566 (MEDEKNEKLNDKE) shows a compositional bias: basic and acidic residues. The segment at 1554-1612 (MEDEKNEKLNDKEGEYEDVTENLNEQEAEEEAEEEAEEEEEEEDKFLTPEHLPINVEIK) is disordered. Acidic residues predominate over residues 1567-1597 (GEYEDVTENLNEQEAEEEAEEEAEEEEEEED).

It is found in the membrane. This is an uncharacterized protein from Plasmodium falciparum (isolate 3D7).